We begin with the raw amino-acid sequence, 442 residues long: Mitochondrial inner membrane magnesium transporter MRS2 (442 aa).

The transit peptide at 1–15 (MYFRFGKGLQIQLRH) directs the protein to the mitochondrion. A helical transmembrane segment spans residues 308 to 328 (LLLFELKVTVYTLGFTVATLV). The short motif at 332 to 335 (YGMN) is the YGMN element. The chain crosses the membrane as a helical span at residues 344–364 (NWGFASVVGLSVAAAAVVTIT).

Belongs to the CorA metal ion transporter (MIT) (TC 1.A.35) family. Homopentamer. Forms homooligomers. Interacts with MFM1.

The protein resides in the mitochondrion inner membrane. High-conductance magnesium-selective channel that mediates the influx of magnesium into the mitochondrial matrix. Essential for the splicing of mRNA group II introns in mitochondria by affecting mitochondrial magnesium concentrations, which are critical for group II intron splicing. It also suppresses a variety of mitochondrial intron mutations and its absence may disturb the assembly of mitochondrial membrane complexes. In Kluyveromyces lactis (strain ATCC 8585 / CBS 2359 / DSM 70799 / NBRC 1267 / NRRL Y-1140 / WM37) (Yeast), this protein is Mitochondrial inner membrane magnesium transporter MRS2 (MRS2).